The following is a 44-amino-acid chain: Protein PsbN (44 aa).

Residues 6 to 26 (FFFTIFLWCLLLSITGYSIYV) traverse the membrane as a helical segment.

The protein belongs to the PsbN family.

The protein localises to the plastid. The protein resides in the chloroplast thylakoid membrane. Its function is as follows. May play a role in photosystem I and II biogenesis. This chain is Protein PsbN, found in Chlorella vulgaris (Green alga).